The primary structure comprises 282 residues: Bis(5'-nucleosyl)-tetraphosphatase, symmetrical (282 aa).

The protein belongs to the Ap4A hydrolase family.

It carries out the reaction P(1),P(4)-bis(5'-adenosyl) tetraphosphate + H2O = 2 ADP + 2 H(+). In terms of biological role, hydrolyzes diadenosine 5',5'''-P1,P4-tetraphosphate to yield ADP. The chain is Bis(5'-nucleosyl)-tetraphosphatase, symmetrical from Salmonella agona (strain SL483).